We begin with the raw amino-acid sequence, 269 residues long: Hydroxyethylthiazole kinase (269 aa).

Residue Met48 participates in substrate binding. Residues Lys124 and Thr170 each coordinate ATP. Gly197 contributes to the substrate binding site.

Belongs to the Thz kinase family. Requires Mg(2+) as cofactor.

It carries out the reaction 5-(2-hydroxyethyl)-4-methylthiazole + ATP = 4-methyl-5-(2-phosphooxyethyl)-thiazole + ADP + H(+). The protein operates within cofactor biosynthesis; thiamine diphosphate biosynthesis; 4-methyl-5-(2-phosphoethyl)-thiazole from 5-(2-hydroxyethyl)-4-methylthiazole: step 1/1. In terms of biological role, catalyzes the phosphorylation of the hydroxyl group of 4-methyl-5-beta-hydroxyethylthiazole (THZ). This Clostridium kluyveri (strain NBRC 12016) protein is Hydroxyethylthiazole kinase.